We begin with the raw amino-acid sequence, 316 residues long: 4-amino-5-hydroxymethyl-2-methylpyrimidine phosphate synthase (316 aa).

Residue K66 is modified to N6-(pyridoxal phosphate)lysine. H70 is a catalytic residue. 118 to 121 (GEFG) is a binding site for pyridoxal 5'-phosphate. A CCCFC; essential for catalytic activity, may be the site of iron coordination motif is present at residues 191-195 (CCCFC).

This sequence belongs to the NMT1/THI5 family. Homodimer. The cofactor is Fe cation.

It carries out the reaction N(6)-(pyridoxal phosphate)-L-lysyl-[4-amino-5-hydroxymethyl-2-methylpyrimidine phosphate synthase] + L-histidyl-[4-amino-5-hydroxymethyl-2-methylpyrimidine phosphate synthase] + 2 Fe(3+) + 4 H2O = L-lysyl-[4-amino-5-hydroxymethyl-2-methylpyrimidine phosphate synthase] + (2S)-2-amino-5-hydroxy-4-oxopentanoyl-[4-amino-5-hydroxymethyl-2-methylpyrimidine phosphate synthase] + 4-amino-2-methyl-5-(phosphooxymethyl)pyrimidine + 3-oxopropanoate + 2 Fe(2+) + 2 H(+). It participates in cofactor biosynthesis; thiamine diphosphate biosynthesis. In terms of biological role, responsible for the formation of the pyrimidine heterocycle in the thiamine biosynthesis pathway. Catalyzes the formation of hydroxymethylpyrimidine phosphate (HMP-P) from histidine and pyridoxal phosphate (PLP). The protein uses PLP and the active site histidine to form HMP-P, generating an inactive enzyme. The enzyme can only undergo a single turnover, which suggests it is a suicide enzyme. The protein is 4-amino-5-hydroxymethyl-2-methylpyrimidine phosphate synthase of Legionella pneumophila subsp. pneumophila (strain Philadelphia 1 / ATCC 33152 / DSM 7513).